The sequence spans 315 residues: Small ribosomal subunit protein uS9m (315 aa).

The N-terminal 42 residues, 1–42, are a transit peptide targeting the mitochondrion; sequence MMASLRHSITSALRSSRQGCSKSAQWQSLDQQFGALRISSRS. Residues 293-315 form a disordered region; the sequence is PRKVERKKHGHVKARKMPTWVKR. Over residues 296–315 the composition is skewed to basic residues; the sequence is VERKKHGHVKARKMPTWVKR.

This sequence belongs to the universal ribosomal protein uS9 family. As to quaternary structure, component of the mitochondrial small ribosomal subunit (mt-SSU). Mature N.crassa 74S mitochondrial ribosomes consist of a small (37S) and a large (54S) subunit. The 37S small subunit contains a 16S ribosomal RNA (16S mt-rRNA) and 32 different proteins. The 54S large subunit contains a 23S rRNA (23S mt-rRNA) and 42 different proteins.

It is found in the mitochondrion. In terms of biological role, component of the mitochondrial ribosome (mitoribosome), a dedicated translation machinery responsible for the synthesis of mitochondrial genome-encoded proteins, including at least some of the essential transmembrane subunits of the mitochondrial respiratory chain. The mitoribosomes are attached to the mitochondrial inner membrane and translation products are cotranslationally integrated into the membrane. The chain is Small ribosomal subunit protein uS9m (mrp-9) from Neurospora crassa (strain ATCC 24698 / 74-OR23-1A / CBS 708.71 / DSM 1257 / FGSC 987).